The chain runs to 255 residues: Taurine import ATP-binding protein TauB (255 aa).

An ABC transporter domain is found at 2 to 229 (LNVSGLWAEY…RYAEGEPCRA (228 aa)). 34-41 (GPSGCGKT) is an ATP binding site.

It belongs to the ABC transporter superfamily. Taurine importer (TC 3.A.1.17.1) family. In terms of assembly, the complex is composed of two ATP-binding proteins (TauB), two transmembrane proteins (TauC) and a solute-binding protein (TauA).

Its subcellular location is the cell inner membrane. The catalysed reaction is taurine(out) + ATP + H2O = taurine(in) + ADP + phosphate + H(+). Its function is as follows. Part of the ABC transporter complex TauABC involved in taurine import. Responsible for energy coupling to the transport system. The polypeptide is Taurine import ATP-binding protein TauB (Yersinia pestis bv. Antiqua (strain Antiqua)).